Here is a 426-residue protein sequence, read N- to C-terminus: Mothers against decapentaplegic homolog 7 (426 aa).

Residues 13–55 (LWRSRAPGGEDEEEGAGGGGGGGELRGEGATDSRAHGAGGGGP) form a disordered region. Basic and acidic residues predominate over residues 37 to 47 (LRGEGATDSRA). An N6-acetyllysine; alternate mark is found at Lys64 and Lys70. Glycyl lysine isopeptide (Lys-Gly) (interchain with G-Cter in ubiquitin); alternate cross-links involve residues Lys64 and Lys70. The region spanning 64-207 (KAVRGAKGHH…LSRLCELESP (144 aa)) is the MH1 domain. 4 residues coordinate Zn(2+): Cys125, Cys180, Cys192, and His197. The PY-motif signature appears at 208–211 (PPPY). Residues 208 to 217 (PPPYSRYPMD) are important for interaction with SMURF2. Ser249 carries the post-translational modification Phosphoserine. In terms of domain architecture, MH2 spans 261 to 426 (WCVVAYWEEK…CWLEVIFNSR (166 aa)).

This sequence belongs to the dwarfin/SMAD family. In terms of assembly, interacts with WWP1. Interacts with COPS5. Interacts with NEDD4L. Interacts with STAMBP. Interacts with RNF111, AXIN1 and AXIN2. Interacts with PPP1R15A. Interacts (via MH2 domain) with EP300. Interacts with ACVR1B, SMURF1, SMURF2 and TGFBR1; SMAD7 recruits SMURF1 and SMURF2 to the TGF-beta receptor and regulates its degradation. Interacts with PDPK1 (via PH domain). Interacts with TSC22D1/TSC-22; the interaction requires TGF-beta and the interaction is inhibited by TGFBR1. In terms of processing, phosphorylation on Ser-249 does not affect its stability, nuclear localization or inhibitory function in TGFB signaling; however it affects its ability to regulate transcription. Phosphorylated by PDPK1. Ubiquitinated by WWP1. Polyubiquitinated by RNF111, which is enhanced by AXIN1 and promotes proteasomal degradation. In response to TGF-beta, ubiquitinated by SMURF1; which promotes its degradation. Post-translationally, acetylation prevents ubiquitination and degradation mediated by SMURF1. As to expression, ubiquitous with higher expression in the lung and vascular endothelium.

It localises to the nucleus. The protein localises to the cytoplasm. In terms of biological role, antagonist of signaling by TGF-beta (transforming growth factor) type 1 receptor superfamily members; has been shown to inhibit TGF-beta (Transforming growth factor) and activin signaling by associating with their receptors thus preventing SMAD2 access. Functions as an adapter to recruit SMURF2 to the TGF-beta receptor complex. Also acts by recruiting the PPP1R15A-PP1 complex to TGFBR1, which promotes its dephosphorylation. Positively regulates PDPK1 kinase activity by stimulating its dissociation from the 14-3-3 protein YWHAQ which acts as a negative regulator. The sequence is that of Mothers against decapentaplegic homolog 7 (SMAD7) from Homo sapiens (Human).